The primary structure comprises 540 residues: DNA-(apurinic or apyrimidinic site) endonuclease (540 aa).

Residues Asn-206 and Glu-239 each coordinate Mg(2+). Positions 256–276 (NNKVYGGKKNEGEERNRGSVK) are disordered. Residues 263-276 (KKNEGEERNRGSVK) show a composition bias toward basic and acidic residues. The Mg(2+) site is built by Asp-400, Asn-402, Asp-530, and His-531. His-531 acts as the Proton acceptor in catalysis.

This sequence belongs to the DNA repair enzymes AP/ExoA family. Mg(2+) is required as a cofactor. The cofactor is Mn(2+). Post-translationally, may be proteolytically cleaved.

It localises to the mitochondrion. It carries out the reaction Exonucleolytic cleavage in the 3'- to 5'-direction to yield nucleoside 5'-phosphates.. Its function is as follows. Multifunctional protein that plays a central role in mitochondrial DNA base excision repair pathway induced by oxidative stress. Has apurinic/apyrimidinic (AP) endonuclease activity towards double-stranded DNA (dsDNA). Has nucleotide incision repair (NIR) activity; acts on dsDNA with oxidized bases thymine glycol and 5,6-dihydro-2'-deoxyuridine. Has 3'-5' exonuclease; can use dsDNA templates with 3'-OH termini including blunt-end, gapped and mismatched 3'-recessed. Has 3'-phosphatase activity; cleaves 3'-phosphate from blunt, recessed and gapped dsDNA templates, followed by 3'-5' exonuclease activity. Has RNase H-like activity; cleaves RNA on 3'-recessed RNA-DNA duplex. Plays a role in merosome infection of host erythrocytes. This chain is DNA-(apurinic or apyrimidinic site) endonuclease, found in Plasmodium berghei (strain Anka).